A 259-amino-acid polypeptide reads, in one-letter code: Eukaryotic translation initiation factor 3 subunit G-2 (259 aa).

In terms of domain architecture, RRM spans 179–257 (SAVRISNLSE…LILSVEWSKP (79 aa)).

This sequence belongs to the eIF-3 subunit G family. Component of the eukaryotic translation initiation factor 3 (eIF-3) complex. The eIF-3 complex interacts with pix.

Its subcellular location is the cytoplasm. In terms of biological role, RNA-binding component of the eukaryotic translation initiation factor 3 (eIF-3) complex, which is involved in protein synthesis of a specialized repertoire of mRNAs and, together with other initiation factors, stimulates binding of mRNA and methionyl-tRNAi to the 40S ribosome. The eIF-3 complex specifically targets and initiates translation of a subset of mRNAs involved in cell proliferation. This subunit can bind 18S rRNA. This is Eukaryotic translation initiation factor 3 subunit G-2 from Drosophila virilis (Fruit fly).